The sequence spans 134 residues: Large ribosomal subunit protein bL20 (134 aa).

Belongs to the bacterial ribosomal protein bL20 family.

Functionally, binds directly to 23S ribosomal RNA and is necessary for the in vitro assembly process of the 50S ribosomal subunit. It is not involved in the protein synthesizing functions of that subunit. This is Large ribosomal subunit protein bL20 from Rhizobium meliloti (strain 1021) (Ensifer meliloti).